The primary structure comprises 458 residues: Repulsive guidance molecule A (458 aa).

The first 53 residues, 1-53 (MGGPGPRRAGTSRERLVVTGRAGWMGMGRGAGRSALGFWPTLAFLLCSFPAAT), serve as a signal peptide directing secretion. The propeptide at 54–176 (SPCKILKCNS…NYTHCGLFGD (123 aa)) is removed in mature form. Positions 121 to 133 (HNCSKDGPTSQPR) are enriched in polar residues. The segment at 121 to 149 (HNCSKDGPTSQPRLHTLPPAGDSQERSDS) is disordered. N-linked (GlcNAc...) asparagine glycans are attached at residues Asn122 and Asn167. 2 disulfides stabilise this stretch: Cys153-Cys234 and Cys171-Cys323. N-linked (GlcNAc...) asparagine glycosylation is present at Asn397. Ala433 carries the GPI-anchor amidated alanine lipid modification. The propeptide at 434–458 (AGLPLAPQPLLGALILLLALFPVFC) is removed in mature form.

Belongs to the repulsive guidance molecule (RGM) family. Interacts with NEO1, BMP2 and BMP4. Autocatalytically cleaved at low pH; the two chains remain linked via two disulfide bonds.

The protein resides in the cell membrane. In terms of biological role, member of the repulsive guidance molecule (RGM) family that performs several functions in the developing and adult nervous system. Regulates cephalic neural tube closure, inhibits neurite outgrowth and cortical neuron branching, and the formation of mature synapses. Binding to its receptor NEO1/neogenin induces activation of RHOA-ROCK1/Rho-kinase signaling pathway through UNC5B-ARHGEF12/LARG-PTK2/FAK1 cascade, leading to collapse of the neuronal growth cone and neurite outgrowth inhibition. Furthermore, RGMA binding to NEO1/neogenin leads to HRAS inactivation by influencing HRAS-PTK2/FAK1-AKT1 pathway. It also functions as a bone morphogenetic protein (BMP) coreceptor that may signal through SMAD1, SMAD5, and SMAD8. The polypeptide is Repulsive guidance molecule A (RGMA) (Macaca fascicularis (Crab-eating macaque)).